We begin with the raw amino-acid sequence, 1250 residues long: TBC1 domain family member 9B (1250 aa).

2 GRAM domains span residues 142-209 and 288-356; these read LKMR…EKNA and ECYR…EKAD. Position 397 is a phosphothreonine (threonine 397). The interval 397–443 is disordered; sequence TPSKQPGSIGSRKASVVDPSTESSPAPQEGSEQPASPASPLSSRQSF. A phosphoserine mark is found at serine 411, serine 432, serine 435, and serine 463. Positions 414–443 are enriched in polar residues; sequence DPSTESSPAPQEGSEQPASPASPLSSRQSF. The 188-residue stretch at 508–695 folds into the Rab-GAP TBC domain; the sequence is GIPESLRGEL…VIVDCFFYEG (188 aa). A helical transmembrane segment spans residues 668–688; that stretch reads LSWFLTLFLSVMPFESAVVIV. In terms of domain architecture, EF-hand spans 879 to 914; that stretch reads HTPLLAGRMFRLLDENKDSLINFKEFVTGMSGMYHG. Disordered regions lie at residues 974–999, 1069–1093, and 1128–1157; these read LPQE…PDYR, SART…ELHQ, and VEGG…MSSY. The span at 984-999 shows a compositional bias: basic and acidic residues; that stretch reads SEERGEEKGTSSPDYR. Serine 1241 bears the Phosphoserine mark.

Its subcellular location is the membrane. May act as a GTPase-activating protein for Rab family protein(s). This is TBC1 domain family member 9B (TBC1D9B) from Homo sapiens (Human).